A 211-amino-acid polypeptide reads, in one-letter code: 3-demethoxyubiquinol 3-hydroxylase (211 aa).

Fe cation-binding residues include E60, E90, H93, E142, E174, and H177.

The protein belongs to the COQ7 family. Requires Fe cation as cofactor.

Its subcellular location is the cell membrane. It catalyses the reaction a 5-methoxy-2-methyl-3-(all-trans-polyprenyl)benzene-1,4-diol + AH2 + O2 = a 3-demethylubiquinol + A + H2O. The protein operates within cofactor biosynthesis; ubiquinone biosynthesis. In terms of biological role, catalyzes the hydroxylation of 2-nonaprenyl-3-methyl-6-methoxy-1,4-benzoquinol during ubiquinone biosynthesis. The polypeptide is 3-demethoxyubiquinol 3-hydroxylase (Francisella tularensis subsp. tularensis (strain FSC 198)).